We begin with the raw amino-acid sequence, 387 residues long: Succinate--CoA ligase [ADP-forming] subunit beta (387 aa).

Residues 9–245 (KDLLESYGLK…KSQENAKELK (237 aa)) form the ATP-grasp domain. ATP-binding positions include Lys-46, 53-55 (GRG), Glu-100, Tyr-103, and Glu-108. Residues Asn-200 and Asp-214 each contribute to the Mg(2+) site. Substrate-binding positions include Asn-265 and 322-324 (GIV).

This sequence belongs to the succinate/malate CoA ligase beta subunit family. Heterotetramer of two alpha and two beta subunits. It depends on Mg(2+) as a cofactor.

It carries out the reaction succinate + ATP + CoA = succinyl-CoA + ADP + phosphate. It catalyses the reaction GTP + succinate + CoA = succinyl-CoA + GDP + phosphate. It functions in the pathway carbohydrate metabolism; tricarboxylic acid cycle; succinate from succinyl-CoA (ligase route): step 1/1. Functionally, succinyl-CoA synthetase functions in the citric acid cycle (TCA), coupling the hydrolysis of succinyl-CoA to the synthesis of either ATP or GTP and thus represents the only step of substrate-level phosphorylation in the TCA. The beta subunit provides nucleotide specificity of the enzyme and binds the substrate succinate, while the binding sites for coenzyme A and phosphate are found in the alpha subunit. The chain is Succinate--CoA ligase [ADP-forming] subunit beta from Francisella tularensis subsp. novicida (strain U112).